The sequence spans 1150 residues: ATP-dependent helicase/deoxyribonuclease subunit B (1150 aa).

8–15 (GRSGSGKS) serves as a coordination point for ATP. Residues Cys-789, Cys-1108, Cys-1111, and Cys-1117 each coordinate [4Fe-4S] cluster.

Belongs to the helicase family. AddB/RexB type 1 subfamily. As to quaternary structure, heterodimer of AddA and AddB. It depends on Mg(2+) as a cofactor. Requires [4Fe-4S] cluster as cofactor.

Functionally, the heterodimer acts as both an ATP-dependent DNA helicase and an ATP-dependent, dual-direction single-stranded exonuclease. Recognizes the chi site generating a DNA molecule suitable for the initiation of homologous recombination. The AddB subunit has 5' -&gt; 3' nuclease activity but not helicase activity. The protein is ATP-dependent helicase/deoxyribonuclease subunit B of Clostridium tetani (strain Massachusetts / E88).